Reading from the N-terminus, the 153-residue chain is Ubiquitin/ISG15-conjugating enzyme E2 L6 (153 aa).

The UBC core domain maps to 2 to 149 (MASKRVAKEL…AEEFTLKFGV (148 aa)). C86 functions as the Glycyl thioester intermediate in the catalytic mechanism.

This sequence belongs to the ubiquitin-conjugating enzyme family. Interacts with RNF19A, RNF19B and RNF144B. Interacts with FLT3 (tyrosine phosphorylated). ISGylated.

The enzyme catalyses S-ubiquitinyl-[E1 ubiquitin-activating enzyme]-L-cysteine + [E2 ubiquitin-conjugating enzyme]-L-cysteine = [E1 ubiquitin-activating enzyme]-L-cysteine + S-ubiquitinyl-[E2 ubiquitin-conjugating enzyme]-L-cysteine.. It functions in the pathway protein modification; protein ubiquitination. Its function is as follows. Catalyzes the covalent attachment of ubiquitin or ISG15 to other proteins. Functions in the E6/E6-AP-induced ubiquitination of p53/TP53. Promotes ubiquitination and subsequent proteasomal degradation of FLT3. In Mus musculus (Mouse), this protein is Ubiquitin/ISG15-conjugating enzyme E2 L6 (Ube2l6).